The chain runs to 467 residues: Protection of telomeres protein 1a (467 aa).

It belongs to the telombin family. In terms of assembly, component of the telomerase holoenzyme complex at least composed of TERT, CBF5 and POT1a. The RNA molecule associated to the telomerase complex, and providing a template for telomeric DNA synthesis, is most likely TR and not TER1 as described previously. Interacts with the N-terminal part of TERT. Interacts with CBF5. Interacts with CTC1 and STN1. Does not interact with TEN1. Expressed in roots, rosette leaves, cauline leaves, stems and flowers.

It is found in the nucleus. The protein resides in the chromosome. The protein localises to the telomere. It localises to the nucleolus. Its subcellular location is the cytoplasm. Functionally, component of the telomerase ribonucleoprotein (RNP) complex that is essential for the positive regulation of telomere length. Binds RNA non-specifically. Binds specifically single-stranded telomeric DNA. Not required to recruit telomerase to telomeres, but stimulates TER1 RNP repeat addition processivity. The protein is Protection of telomeres protein 1a of Arabidopsis thaliana (Mouse-ear cress).